The primary structure comprises 334 residues: O(6)-methylguanine-induced apoptosis 2 (334 aa).

Positions 1–60 are disordered; sequence MDNSAQKNERTGKHPRRASEVQKGFTAAYPTQSSIPFKSQASVIPESEKKGFNSQAKRFP. A compositionally biased stretch (basic and acidic residues) spans 7–20; it reads KNERTGKHPRRASE. Over residues 29–42 the composition is skewed to polar residues; sequence YPTQSSIPFKSQAS. STPGR repeat units lie at residues 67–74, 109–117, 148–155, 187–206, 225–257, 267–282, and 306–316; these read PGPGFYNV, PAANAYTIP, PAPNYYNA, GPPP…SPNT, GPGP…SAQP, PGPG…GPRK, and LPGPATYKPEL. Residue Tyr72 is modified to Phosphotyrosine.

It belongs to the STPG1 family.

It is found in the cytoplasm. Its subcellular location is the nucleus. Functionally, may positively contribute to the induction of apoptosis triggered by O(6)-methylguanine. This is O(6)-methylguanine-induced apoptosis 2 (STPG1) from Homo sapiens (Human).